Here is a 383-residue protein sequence, read N- to C-terminus: Izumo sperm-egg fusion protein 1 (383 aa).

An N-terminal signal peptide occupies residues Met-1–Leu-21. Intrachain disulfides connect Cys-22–Cys-149, Cys-25–Cys-152, Cys-135–Cys-159, Cys-139–Cys-165, and Cys-182–Cys-233. The Extracellular portion of the chain corresponds to Cys-22–Arg-306. The segment at Trp-148–Arg-160 is important for interaction with IZUMO1R. The Ig-like C2-type domain occupies Glu-167 to Thr-251. Residue Asn-204 is glycosylated (N-linked (GlcNAc...) asparagine). A helical membrane pass occupies residues Leu-307–Leu-327. The Cytoplasmic portion of the chain corresponds to His-328–Asn-383. Residues Lys-335–Asn-383 form a disordered region. The segment covering Lys-337 to Ser-346 has biased composition (polar residues). 3 positions are modified to phosphoserine: Ser-339, Ser-346, and Ser-366. A compositionally biased stretch (basic and acidic residues) spans Phe-370–Asn-383. Thr-372 carries the phosphothreonine modification.

This sequence belongs to the Izumo family. In terms of assembly, monomer, homodimer; disulfide-linked and homooligomer; depending on the context. Interacts with IZUMO1R/JUNO. IZUMO1 and IZUMO1R/JUNO form a complex with 1:1 stoichiometry. In gamete recognition, IZUMO1R/JUNO first binds to monomeric IZUMO1. The weak, but specific interaction with IZUMO1R/JUNO induces IZUMO1 homodimerization. The process follows a tight binding phase where IZUMO1 bends the entire structure towards the sperm membrane side through a thiol-disulfide exchange reaction. The molecule no longer binds to IZUMO1R/JUNO and instead binds to a putative second oocyte receptor. Interacts with ACE3. Part of a oolemmal binding multimeric complex (IZUMO1 complex) composed at least of IZUMO1 and GLIPR1L1; the complex assemblage is influenced by the maturation status of the male germ cell. Interacts with GLIPR1L1. Interacts with FREY; the interaction retains IZUMO1 at the endoplasmic reticulum membrane and coordinates IZUMO1 complex assembly. Interacts with WDR54. Forms a complex with SPACA6 and TMEM81 on spermatocyte cell membrane. N-glycosylated. Glycosylation is not essential for fusion and for proper protein trafficking in sperm. In terms of processing, phosphorylated. The cytoplasmic C-terminus is phosphorylated and undergoes phosphorylation changes during epididymal transit. As to expression, expressed in sperm (at protein level).

The protein resides in the cell membrane. It is found in the cytoplasmic vesicle. Its subcellular location is the secretory vesicle. The protein localises to the acrosome membrane. Its function is as follows. Essential sperm cell-surface protein required for fertilization by acting as a ligand for IZUMO1R/JUNO receptor on egg. The IZUMO1:IZUMO1R/JUNO interaction is a necessary adhesion event between sperm and egg that is required for fertilization but is not sufficient for cell fusion. The ligand-receptor interaction probably does not act as a membrane 'fusogen'. Plays a critical role in sperm-oolemma binding prior to plasma membrane fusion. Can mediate cell-cell fusion in cultured mammalian cells independently of its binding to IZUMO1R/JUNO. The chain is Izumo sperm-egg fusion protein 1 from Rattus norvegicus (Rat).